Consider the following 485-residue polypeptide: Probable glycine dehydrogenase (decarboxylating) subunit 2 (485 aa).

Lysine 273 bears the N6-(pyridoxal phosphate)lysine mark.

The protein belongs to the GcvP family. C-terminal subunit subfamily. The glycine cleavage system is composed of four proteins: P, T, L and H. In this organism, the P 'protein' is a heterodimer of two subunits. The cofactor is pyridoxal 5'-phosphate.

The enzyme catalyses N(6)-[(R)-lipoyl]-L-lysyl-[glycine-cleavage complex H protein] + glycine + H(+) = N(6)-[(R)-S(8)-aminomethyldihydrolipoyl]-L-lysyl-[glycine-cleavage complex H protein] + CO2. Functionally, the glycine cleavage system catalyzes the degradation of glycine. The P protein binds the alpha-amino group of glycine through its pyridoxal phosphate cofactor; CO(2) is released and the remaining methylamine moiety is then transferred to the lipoamide cofactor of the H protein. In Bacillus licheniformis (strain ATCC 14580 / DSM 13 / JCM 2505 / CCUG 7422 / NBRC 12200 / NCIMB 9375 / NCTC 10341 / NRRL NRS-1264 / Gibson 46), this protein is Probable glycine dehydrogenase (decarboxylating) subunit 2.